The chain runs to 365 residues: 3-dehydroquinate synthase (365 aa).

Residues 95-99 (GVVGD), 119-120 (TT), Lys132, and Lys141 each bind NAD(+). The Zn(2+) site is built by Glu174, His238, and His255.

It belongs to the sugar phosphate cyclases superfamily. Dehydroquinate synthase family. Co(2+) is required as a cofactor. The cofactor is Zn(2+). NAD(+) serves as cofactor.

It is found in the cytoplasm. It catalyses the reaction 7-phospho-2-dehydro-3-deoxy-D-arabino-heptonate = 3-dehydroquinate + phosphate. It participates in metabolic intermediate biosynthesis; chorismate biosynthesis; chorismate from D-erythrose 4-phosphate and phosphoenolpyruvate: step 2/7. Catalyzes the conversion of 3-deoxy-D-arabino-heptulosonate 7-phosphate (DAHP) to dehydroquinate (DHQ). The protein is 3-dehydroquinate synthase of Chlorobium chlorochromatii (strain CaD3).